The following is a 321-amino-acid chain: Lipoyl synthase (321 aa).

Cysteine 68, cysteine 73, cysteine 79, cysteine 94, cysteine 98, cysteine 101, and serine 308 together coordinate [4Fe-4S] cluster. Residues 80 to 297 (FNHGTATFMI…KAEAIAMGFT (218 aa)) enclose the Radical SAM core domain.

It belongs to the radical SAM superfamily. Lipoyl synthase family. [4Fe-4S] cluster is required as a cofactor.

It is found in the cytoplasm. It catalyses the reaction [[Fe-S] cluster scaffold protein carrying a second [4Fe-4S](2+) cluster] + N(6)-octanoyl-L-lysyl-[protein] + 2 oxidized [2Fe-2S]-[ferredoxin] + 2 S-adenosyl-L-methionine + 4 H(+) = [[Fe-S] cluster scaffold protein] + N(6)-[(R)-dihydrolipoyl]-L-lysyl-[protein] + 4 Fe(3+) + 2 hydrogen sulfide + 2 5'-deoxyadenosine + 2 L-methionine + 2 reduced [2Fe-2S]-[ferredoxin]. Its pathway is protein modification; protein lipoylation via endogenous pathway; protein N(6)-(lipoyl)lysine from octanoyl-[acyl-carrier-protein]: step 2/2. In terms of biological role, catalyzes the radical-mediated insertion of two sulfur atoms into the C-6 and C-8 positions of the octanoyl moiety bound to the lipoyl domains of lipoate-dependent enzymes, thereby converting the octanoylated domains into lipoylated derivatives. In Pectobacterium carotovorum subsp. carotovorum (strain PC1), this protein is Lipoyl synthase.